Consider the following 486-residue polypeptide: Cardiolipin synthase A (486 aa).

2 helical membrane-spanning segments follow: residues 3 to 23 and 38 to 58; these read TVYT…IAGV and MAWL…YLAV. 2 PLD phosphodiesterase domains span residues 219–246 and 399–426; these read MDLR…VDPR and EGGL…DMRS. Residues His224, Lys226, Asp231, His404, Lys406, and Asp411 contribute to the active site.

This sequence belongs to the phospholipase D family. Cardiolipin synthase subfamily. ClsA sub-subfamily.

Its subcellular location is the cell inner membrane. It catalyses the reaction 2 a 1,2-diacyl-sn-glycero-3-phospho-(1'-sn-glycerol) = a cardiolipin + glycerol. Functionally, catalyzes the reversible phosphatidyl group transfer from one phosphatidylglycerol molecule to another to form cardiolipin (CL) (diphosphatidylglycerol) and glycerol. The protein is Cardiolipin synthase A of Shigella dysenteriae serotype 1 (strain Sd197).